The chain runs to 252 residues: Hydroxyacylglutathione hydrolase (252 aa).

7 residues coordinate Zn(2+): His-54, His-56, Asp-58, His-59, His-113, Asp-132, and His-170.

This sequence belongs to the metallo-beta-lactamase superfamily. Glyoxalase II family. In terms of assembly, monomer. Requires Zn(2+) as cofactor.

The catalysed reaction is an S-(2-hydroxyacyl)glutathione + H2O = a 2-hydroxy carboxylate + glutathione + H(+). It participates in secondary metabolite metabolism; methylglyoxal degradation; (R)-lactate from methylglyoxal: step 2/2. Functionally, thiolesterase that catalyzes the hydrolysis of S-D-lactoyl-glutathione to form glutathione and D-lactic acid. This Synechococcus sp. (strain JA-3-3Ab) (Cyanobacteria bacterium Yellowstone A-Prime) protein is Hydroxyacylglutathione hydrolase.